The sequence spans 270 residues: MLPPLKKGWQRTLDLRFQQAGGKTVLASAQHVGPLTVQRPFYPEEETCHLYLLHPPGGIVGGDELTISAHLAPGCHTLITMPGASKFYRSSGAQALVRQQLTLAPQATLEWLPQDAIFFPGANARLFTTFHLCAFSRLLAWDLLCLGRPVIGETFSHGTLSNRLEVWVDDEPLLVERLQLQEGELSSVAERPWVGTLLCYPATDALLDGVRDALAPLGLYAGASLTDRLLTVRFLSDDNLICQRVMRDVWQFLRPHLTGKSPVLPRIWLT.

This sequence belongs to the UreD family. As to quaternary structure, ureD, UreF and UreG form a complex that acts as a GTP-hydrolysis-dependent molecular chaperone, activating the urease apoprotein by helping to assemble the nickel containing metallocenter of UreC. The UreE protein probably delivers the nickel.

The protein localises to the cytoplasm. In terms of biological role, required for maturation of urease via the functional incorporation of the urease nickel metallocenter. This chain is Urease accessory protein UreD, found in Klebsiella pneumoniae.